A 328-amino-acid polypeptide reads, in one-letter code: P2Y purinoceptor 3 (328 aa).

At 1 to 22 the chain is on the extracellular side; it reads MSMANFTGGRNSCTFHEEFKQV. The N-linked (GlcNAc...) asparagine glycan is linked to Asn5. Residues 23–43 traverse the membrane as a helical segment; sequence LLPLVYSVVFLLGLPLNAVVI. Residues 44 to 57 are Cytoplasmic-facing; sequence GQIWLARKALTRTT. Residues 58-78 traverse the membrane as a helical segment; the sequence is IYMLNLAMADLLYVCSLPLLI. The Extracellular segment spans residues 79–96; sequence YNYTQKDYWPFGDFTCKF. A disulfide bond links Cys94 and Cys172. A helical membrane pass occupies residues 97 to 117; that stretch reads VRFQFYTNLHGSILFLTCISV. At 118-139 the chain is on the cytoplasmic side; that stretch reads QRYMGICHPLASWHKKKGKKLT. A helical transmembrane segment spans residues 140 to 160; it reads WLVCAAVWFIVIAQCLPTFVF. Topologically, residues 161 to 189 are extracellular; sequence ASTGTQRNRTVCYDLSPPDRSTSYFPYGI. A helical membrane pass occupies residues 190 to 210; that stretch reads TLTITGFLLPFAAILACYCSM. Residues 211–231 are Cytoplasmic-facing; that stretch reads ARILCQKDELIGLAVHKKKDK. The helical transmembrane segment at 232-252 threads the bilayer; the sequence is AVRMIIIVVIVFSISFFPFHL. Residues 253-275 lie on the Extracellular side of the membrane; sequence TKTIYLIVRSSASLPCPTLQAFA. The chain crosses the membrane as a helical span at residues 276–298; the sequence is IAYKCTRPFASMNSVLDPILFYF. At 299 to 323 the chain is on the cytoplasmic side; the sequence is TQRKFRESTRYLLDKMSSKWRQDHC.

The protein belongs to the G-protein coupled receptor 1 family.

It localises to the cell membrane. Its function is as follows. Receptor for extracellular ADP &gt; UTP &gt; ATP = UDP. The activity of this receptor is mediated by G proteins which activate a phosphatidylinositol-calcium second messenger system. This is P2Y purinoceptor 3 (P2RY3) from Gallus gallus (Chicken).